The sequence spans 1824 residues: E3 ubiquitin-protein ligase UBR1 (1824 aa).

Residues 107–178 form a UBR-type zinc finger; that stretch reads TVCGKVFKNG…KDQYCELHLA (72 aa). Disordered stretches follow at residues 1006–1043 and 1073–1093; these read KQAP…ENRA and ADTE…DWED. Residues 1033-1043 show a composition bias toward basic and acidic residues; the sequence is EQAREERENRA. The RING-type; atypical zinc-finger motif lies at 1126-1220; sequence FKCILCFENC…VEFQCPYCRT (95 aa).

It belongs to the E3 ubiquitin-protein ligase UBR1-like family.

The catalysed reaction is S-ubiquitinyl-[E2 ubiquitin-conjugating enzyme]-L-cysteine + [acceptor protein]-L-lysine = [E2 ubiquitin-conjugating enzyme]-L-cysteine + N(6)-ubiquitinyl-[acceptor protein]-L-lysine.. It participates in protein modification; protein ubiquitination. E3 ubiquitin-protein ligase which is a component of the N-end rule pathway. Recognizes and binds to proteins bearing specific N-terminal residues that are destabilizing according to the N-end rule, leading to their ubiquitination and subsequent degradation. This Drosophila melanogaster (Fruit fly) protein is E3 ubiquitin-protein ligase UBR1.